The sequence spans 134 residues: Small ribosomal subunit protein bS16 (134 aa).

Positions 105-134 are disordered; that stretch reads EAERRQKRLTAKTRRRQAKKAAEAAGSAEG. The span at 109-123 shows a compositional bias: basic residues; that stretch reads RQKRLTAKTRRRQAK.

Belongs to the bacterial ribosomal protein bS16 family.

The chain is Small ribosomal subunit protein bS16 from Chlorobaculum parvum (strain DSM 263 / NCIMB 8327) (Chlorobium vibrioforme subsp. thiosulfatophilum).